The following is a 107-amino-acid chain: ATP-dependent Clp protease adapter protein ClpS (107 aa).

The protein belongs to the ClpS family. In terms of assembly, binds to the N-terminal domain of the chaperone ClpA.

Functionally, involved in the modulation of the specificity of the ClpAP-mediated ATP-dependent protein degradation. The sequence is that of ATP-dependent Clp protease adapter protein ClpS from Acinetobacter baylyi (strain ATCC 33305 / BD413 / ADP1).